A 356-amino-acid chain; its full sequence is Tyrosine recombinase XerS (356 aa).

The Core-binding (CB) domain maps to 16 to 121 (TMPWYILEYY…ALSSLYKYLT (106 aa)). A Tyr recombinase domain is found at 169 to 354 (EFLQYIDREY…VNDEQKNALN (186 aa)). Residues Arg-210, Lys-234, His-306, Arg-309, and His-332 contribute to the active site. Tyr-341 acts as the O-(3'-phospho-DNA)-tyrosine intermediate in catalysis.

It belongs to the 'phage' integrase family. XerS subfamily.

The protein localises to the cytoplasm. FtsK is required for recombination. In terms of biological role, site-specific tyrosine recombinase, which acts by catalyzing the cutting and rejoining of the recombining DNA molecules. Essential to convert dimers of the bacterial chromosome into monomers to permit their segregation at cell division. This chain is Tyrosine recombinase XerS, found in Streptococcus gordonii (strain Challis / ATCC 35105 / BCRC 15272 / CH1 / DL1 / V288).